The following is a 208-amino-acid chain: ATP phosphoribosyltransferase (208 aa).

It belongs to the ATP phosphoribosyltransferase family. Short subfamily. In terms of assembly, heteromultimer composed of HisG and HisZ subunits.

Its subcellular location is the cytoplasm. It catalyses the reaction 1-(5-phospho-beta-D-ribosyl)-ATP + diphosphate = 5-phospho-alpha-D-ribose 1-diphosphate + ATP. The protein operates within amino-acid biosynthesis; L-histidine biosynthesis; L-histidine from 5-phospho-alpha-D-ribose 1-diphosphate: step 1/9. In terms of biological role, catalyzes the condensation of ATP and 5-phosphoribose 1-diphosphate to form N'-(5'-phosphoribosyl)-ATP (PR-ATP). Has a crucial role in the pathway because the rate of histidine biosynthesis seems to be controlled primarily by regulation of HisG enzymatic activity. This chain is ATP phosphoribosyltransferase, found in Lactococcus lactis subsp. cremoris (strain MG1363).